Consider the following 365-residue polypeptide: tRNA(Met) cytidine acetate ligase (365 aa).

ATP-binding positions include Ile7–Leu20, Gly96, Asn152, and Arg175.

It belongs to the TmcAL family.

It localises to the cytoplasm. The enzyme catalyses cytidine(34) in elongator tRNA(Met) + acetate + ATP = N(4)-acetylcytidine(34) in elongator tRNA(Met) + AMP + diphosphate. Its function is as follows. Catalyzes the formation of N(4)-acetylcytidine (ac(4)C) at the wobble position of elongator tRNA(Met), using acetate and ATP as substrates. First activates an acetate ion to form acetyladenylate (Ac-AMP) and then transfers the acetyl group to tRNA to form ac(4)C34. In Streptococcus pneumoniae (strain JJA), this protein is tRNA(Met) cytidine acetate ligase.